The chain runs to 286 residues: Probable syntaxin-7B (286 aa).

Residues 1–257 lie on the Cytoplasmic side of the membrane; sequence MTDRQPLISK…YVYKSSYRKK (257 aa). A compositionally biased stretch (basic and acidic residues) spans 97–107; that stretch reads LSTSNKKESSH. The interval 97–160 is disordered; that stretch reads LSTSNKKESS…TNNNNNNNNN (64 aa). A compositionally biased stretch (low complexity) spans 114–160; the sequence is QQQQQQQNNGNSNNNGYNTRGGYNQQQQQQQQQYNDYTNNNNNNNNN. The t-SNARE coiled-coil homology domain maps to 185-247; it reads NRILDERNAN…EDAVVELEKA (63 aa). The chain crosses the membrane as a helical; Anchor for type IV membrane protein span at residues 258 to 278; it reads MIIFVICLLVTLVAVGIFLAI. Residues 279–286 are Vesicular-facing; sequence YYGVIKKK.

This sequence belongs to the syntaxin family.

It localises to the membrane. This is Probable syntaxin-7B (syn7B) from Dictyostelium discoideum (Social amoeba).